Here is a 201-residue protein sequence, read N- to C-terminus: Ribosome maturation factor RimP (201 aa).

The protein belongs to the RimP family.

It localises to the cytoplasm. Functionally, required for maturation of 30S ribosomal subunits. The polypeptide is Ribosome maturation factor RimP (Acidiphilium cryptum (strain JF-5)).